A 138-amino-acid chain; its full sequence is ATP synthase epsilon chain (138 aa).

This sequence belongs to the ATPase epsilon chain family. As to quaternary structure, F-type ATPases have 2 components, CF(1) - the catalytic core - and CF(0) - the membrane proton channel. CF(1) has five subunits: alpha(3), beta(3), gamma(1), delta(1), epsilon(1). CF(0) has three main subunits: a, b and c.

Its subcellular location is the cell inner membrane. Its function is as follows. Produces ATP from ADP in the presence of a proton gradient across the membrane. In Delftia acidovorans (strain DSM 14801 / SPH-1), this protein is ATP synthase epsilon chain.